The primary structure comprises 399 residues: UDP-N-acetylglucosamine--N-acetylmuramyl-(pentapeptide) pyrophosphoryl-undecaprenol N-acetylglucosamine transferase (399 aa).

Residues 1–21 (MTSRFGHSHHPRRGRSARARA) are compositionally biased toward basic residues. Residues 1–30 (MTSRFGHSHHPRRGRSARARAGRREGVQSN) form a disordered region. Residues 58 to 60 (TGG), N170, R206, S234, I288, and Q333 contribute to the UDP-N-acetyl-alpha-D-glucosamine site.

This sequence belongs to the glycosyltransferase 28 family. MurG subfamily.

It localises to the cell inner membrane. It carries out the reaction di-trans,octa-cis-undecaprenyl diphospho-N-acetyl-alpha-D-muramoyl-L-alanyl-D-glutamyl-meso-2,6-diaminopimeloyl-D-alanyl-D-alanine + UDP-N-acetyl-alpha-D-glucosamine = di-trans,octa-cis-undecaprenyl diphospho-[N-acetyl-alpha-D-glucosaminyl-(1-&gt;4)]-N-acetyl-alpha-D-muramoyl-L-alanyl-D-glutamyl-meso-2,6-diaminopimeloyl-D-alanyl-D-alanine + UDP + H(+). It participates in cell wall biogenesis; peptidoglycan biosynthesis. Functionally, cell wall formation. Catalyzes the transfer of a GlcNAc subunit on undecaprenyl-pyrophosphoryl-MurNAc-pentapeptide (lipid intermediate I) to form undecaprenyl-pyrophosphoryl-MurNAc-(pentapeptide)GlcNAc (lipid intermediate II). In Acidovorax ebreus (strain TPSY) (Diaphorobacter sp. (strain TPSY)), this protein is UDP-N-acetylglucosamine--N-acetylmuramyl-(pentapeptide) pyrophosphoryl-undecaprenol N-acetylglucosamine transferase.